We begin with the raw amino-acid sequence, 199 residues long: 7-methyl-GTP pyrophosphatase (199 aa).

The Proton acceptor role is filled by Asp-76.

Belongs to the Maf family. YceF subfamily. It depends on a divalent metal cation as a cofactor.

The protein localises to the cytoplasm. The enzyme catalyses N(7)-methyl-GTP + H2O = N(7)-methyl-GMP + diphosphate + H(+). Functionally, nucleoside triphosphate pyrophosphatase that hydrolyzes 7-methyl-GTP (m(7)GTP). May have a dual role in cell division arrest and in preventing the incorporation of modified nucleotides into cellular nucleic acids. The chain is 7-methyl-GTP pyrophosphatase from Rhizobium meliloti (strain 1021) (Ensifer meliloti).